The sequence spans 81 residues: Extracellular matrix regulatory protein B (81 aa).

In terms of biological role, regulates the biosynthesis of the extracellular matrix and the biofilm formation. May act as an enhancer of biofilm gene expression. Acts in parallel to the pathway that governs SinR derepression. The sequence is that of Extracellular matrix regulatory protein B from Bacillus subtilis (strain 168).